Consider the following 304-residue polypeptide: Phosphoribosylaminoimidazole-succinocarboxamide synthase (304 aa).

Belongs to the SAICAR synthetase family.

It catalyses the reaction 5-amino-1-(5-phospho-D-ribosyl)imidazole-4-carboxylate + L-aspartate + ATP = (2S)-2-[5-amino-1-(5-phospho-beta-D-ribosyl)imidazole-4-carboxamido]succinate + ADP + phosphate + 2 H(+). The protein operates within purine metabolism; IMP biosynthesis via de novo pathway; 5-amino-1-(5-phospho-D-ribosyl)imidazole-4-carboxamide from 5-amino-1-(5-phospho-D-ribosyl)imidazole-4-carboxylate: step 1/2. The sequence is that of Phosphoribosylaminoimidazole-succinocarboxamide synthase from Streptomyces griseus subsp. griseus (strain JCM 4626 / CBS 651.72 / NBRC 13350 / KCC S-0626 / ISP 5235).